The sequence spans 143 residues: D-aminoacyl-tRNA deacylase (143 aa).

Positions 135 to 136 (GP) match the Gly-cisPro motif, important for rejection of L-amino acids motif.

The protein belongs to the DTD family. As to quaternary structure, homodimer.

It localises to the cytoplasm. It catalyses the reaction glycyl-tRNA(Ala) + H2O = tRNA(Ala) + glycine + H(+). The enzyme catalyses a D-aminoacyl-tRNA + H2O = a tRNA + a D-alpha-amino acid + H(+). An aminoacyl-tRNA editing enzyme that deacylates mischarged D-aminoacyl-tRNAs. Also deacylates mischarged glycyl-tRNA(Ala), protecting cells against glycine mischarging by AlaRS. Acts via tRNA-based rather than protein-based catalysis; rejects L-amino acids rather than detecting D-amino acids in the active site. By recycling D-aminoacyl-tRNA to D-amino acids and free tRNA molecules, this enzyme counteracts the toxicity associated with the formation of D-aminoacyl-tRNA entities in vivo and helps enforce protein L-homochirality. In Mycobacterium avium (strain 104), this protein is D-aminoacyl-tRNA deacylase.